A 295-amino-acid chain; its full sequence is Probable deoxyhypusine synthase (295 aa).

The active-site Nucleophile is the K267.

The protein belongs to the deoxyhypusine synthase family. It depends on NAD(+) as a cofactor.

It catalyses the reaction [eIF5A protein]-L-lysine + spermidine = [eIF5A protein]-deoxyhypusine + propane-1,3-diamine. The protein operates within protein modification; eIF5A hypusination. In terms of biological role, catalyzes the NAD-dependent oxidative cleavage of spermidine and the subsequent transfer of the butylamine moiety of spermidine to the epsilon-amino group of a specific lysine residue of the eIF-5A precursor protein to form the intermediate deoxyhypusine residue. In Pyrobaculum calidifontis (strain DSM 21063 / JCM 11548 / VA1), this protein is Probable deoxyhypusine synthase.